A 141-amino-acid chain; its full sequence is Nucleoside diphosphate kinase (141 aa).

Lys11, Phe59, Arg87, Thr93, Arg104, and Asn114 together coordinate ATP. The active-site Pros-phosphohistidine intermediate is the His117.

Belongs to the NDK family. In terms of assembly, homotetramer. The cofactor is Mg(2+).

It localises to the cytoplasm. The enzyme catalyses a 2'-deoxyribonucleoside 5'-diphosphate + ATP = a 2'-deoxyribonucleoside 5'-triphosphate + ADP. It catalyses the reaction a ribonucleoside 5'-diphosphate + ATP = a ribonucleoside 5'-triphosphate + ADP. Functionally, major role in the synthesis of nucleoside triphosphates other than ATP. The ATP gamma phosphate is transferred to the NDP beta phosphate via a ping-pong mechanism, using a phosphorylated active-site intermediate. The protein is Nucleoside diphosphate kinase of Mannheimia succiniciproducens (strain KCTC 0769BP / MBEL55E).